Reading from the N-terminus, the 247-residue chain is 3-deoxy-manno-octulosonate cytidylyltransferase (247 aa).

It belongs to the KdsB family.

The protein localises to the cytoplasm. It catalyses the reaction 3-deoxy-alpha-D-manno-oct-2-ulosonate + CTP = CMP-3-deoxy-beta-D-manno-octulosonate + diphosphate. Its pathway is nucleotide-sugar biosynthesis; CMP-3-deoxy-D-manno-octulosonate biosynthesis; CMP-3-deoxy-D-manno-octulosonate from 3-deoxy-D-manno-octulosonate and CTP: step 1/1. It functions in the pathway bacterial outer membrane biogenesis; lipopolysaccharide biosynthesis. Functionally, activates KDO (a required 8-carbon sugar) for incorporation into bacterial lipopolysaccharide in Gram-negative bacteria. This chain is 3-deoxy-manno-octulosonate cytidylyltransferase, found in Leptospira interrogans serogroup Icterohaemorrhagiae serovar Lai (strain 56601).